Consider the following 142-residue polypeptide: Large ribosomal subunit protein uL11 (142 aa).

Belongs to the universal ribosomal protein uL11 family. In terms of assembly, part of the ribosomal stalk of the 50S ribosomal subunit. Interacts with L10 and the large rRNA to form the base of the stalk. L10 forms an elongated spine to which L12 dimers bind in a sequential fashion forming a multimeric L10(L12)X complex. Post-translationally, one or more lysine residues are methylated.

Its function is as follows. Forms part of the ribosomal stalk which helps the ribosome interact with GTP-bound translation factors. This chain is Large ribosomal subunit protein uL11, found in Rhodopseudomonas palustris (strain BisB5).